A 585-amino-acid polypeptide reads, in one-letter code: Arginine--tRNA ligase (585 aa).

Residues 131–141 carry the 'HIGH' region motif; the sequence is ANPTGPMHVGH.

The protein belongs to the class-I aminoacyl-tRNA synthetase family. As to quaternary structure, monomer.

It is found in the cytoplasm. The catalysed reaction is tRNA(Arg) + L-arginine + ATP = L-arginyl-tRNA(Arg) + AMP + diphosphate. The chain is Arginine--tRNA ligase from Rhizobium meliloti (strain 1021) (Ensifer meliloti).